A 211-amino-acid polypeptide reads, in one-letter code: UPF0056 membrane protein BUsg_257 (211 aa).

Helical transmembrane passes span Phe14–Met34, Ala54–Ile74, Ile76–Ser96, Val116–Trp136, Ser144–Phe164, and Ile185–Ile205.

This sequence belongs to the UPF0056 (MarC) family.

The protein resides in the cell membrane. The sequence is that of UPF0056 membrane protein BUsg_257 from Buchnera aphidicola subsp. Schizaphis graminum (strain Sg).